We begin with the raw amino-acid sequence, 224 residues long: uncharacterized protein (224 aa).

4 helical membrane passes run 25-45 (ALAWLCDTVLLAILLAIIYGI), 56-76 (VFLIMTVSQAVLWLTYFVILP), 107-127 (ELFLWVWYSVIFLALAIYFFV), and 149-169 (IFVKILLSVISVLQLVFVVYF).

It is found in the cell membrane. This is an uncharacterized protein from Mycoplasma pneumoniae (strain ATCC 29342 / M129 / Subtype 1) (Mycoplasmoides pneumoniae).